A 2647-amino-acid polypeptide reads, in one-letter code: MSSSHSRCGQSAAVASPGGSIDSRDAEMPATEKDLAEDAPWKKIQQNTFTRWCNEHLKCVSKRIANLQTDLSDGLRLIALLEVLSQKKMHRKHNQRPTFRQMQLENVSVALEFLDRESIKLVSIDSKAIVDGNLKLILGLIWTLILHYSISMPMWDEEEDEEAKKQTPKQRLLGWIQNKLPQLPITNFSRDWQSGRALGALVDSCAPGLCPDWDSWDASKPVNNAREAMQQADDWLGIPQVITPEEIVDPNVDEHSVMTYLSQFPKAKLKPGAPLRPKLNPKKARAYGPGIEPTGNMVKKRAEFTVETRSAGQGEVLVYVEDPAGHQEEAKVTANNDKNRTFSVWYVPEVTGTHKVTVLFAGQHIAKSPFEVYVDKSQGDASKVTAQGPGLEPSGNIANKTTYFEIFTAGAGMGEVEVVIQDPTGQKGTVEPQLEARGDSTYRCSYQPTMEGVHTVHVTFAGVPIPRSPYTVTVGQACNPAACRAIGRGLQPKGVRVKETADFKVYTKGAGSGELKVTVKGPKGEERVKQKDLGDGVYGFEYYPTIPGTYTVTITWGGQNIGRSPFEVKVGTECGNQKVRAWGPGLEGGIVGKSADFVVEAIGDDVGTLGFSVEGPSQAKIECDDKGDGSCDVRYWPQEAGEYAVHVLCNSEDIRLSPFMADIREAPQDFHPDRVKARGPGLEKTGVAVNKPAEFTVDAKHAGKAPLRVQVQDNEGCSVEATVKDNGNGTYSCSYVPRKPVKHTAMVSWGGVSIPNSPFRVNVGAGSHPNKVKVYGPGVAKTGLKAHEPTYFTVDCTEAGQGDVSIGIKCAPGVVGPTEADIDFDIIRNDNDTFTVKYTPCGAGSYTIMVLFADQATPTSPIRVKVEPSHDASKVKAEGPGLNRTGVELGKPTHFTVNAKTAGKGKLDVQFSGLAKGDAVRDVDIIDHHDNTYTVKYIPVQQGPVGVNVTYGGDHIPKSPFSVGVSPSLDLSKIKVSGLGDKVDVGKDQEFTVKSKGAGGQGKVASKIVSPSGAAVPCKVEPGLGADNSVVRFVPREEGPYEVEVTYDGVPVPGSPFPLEAVAPTKPSKVKAFGPGLQGGNAGSPARFTIDTKGAGTGGLGLTVEGPCEAQLECLDNGDGTCSVSYVPTEPGDYNINILFADTHIPGSPFKAHVAPCFDASKVKCSGPGLERATAGEVGQFQVDCSSAGSAELTIEICSEAGLPAEVYIQDHGDGTHTITYIPLCPGAYTVTIKYGGQPVPNFPSKLQVEPAVDTSGVQCYGPGIEGQGVFREATTEFSVDARALTQTGGPHVKARVANPSGNLTDTYVQDCGDGTYKVEYTPYEEGVHSVDVTYDGSPVPSSPFQVPVTEGCDPSRVRVHGPGIQSGTTNKPNKFTVETRGAGTGGLGLAVEGPSEAKMSCMDNKDGSCSVEYIPYEAGTYSLNVTYGGHQVPGSPFKVPVHDVTDASKVKCSGPGLSPGMVRANLPQSFQVDTSKAGVAPLQVKVQGPKGLVEPVDVVDNADGTQTVNYVPSREGSYSISVLYGEEEVPRSPFKVKVLPTHDASKVKASGPGLNTTGVPASLPVEFTIDAKDAGEGLLAVQITDPEGKPKKTHIQDNHDGTYTVAYVPDVPGRYTILIKYGGDEIPFSPYRVRAVPTGDASKCTVTVSIGGHGLGAGIGPTIQIGEETVITVDTKAAGKGKVTCTVCTPDGSEVDVDVVENEDGTFDIFYTAPQPGKYVICVRFGGEHVPNSPFQVTALAGDQPTVQTPLRSQQLAPQYNYPQGSQQTWIPERPMVGVNGLDVTSLRPFDLVIPFTIKKGEITGEVRMPSGKVAQPSITDNKDGTVTVRYSPSEAGLHEMDIRYDNMHIPGSPLQFYVDYVNCGHITAYGPGLTHGVVNKPATFTVNTKDAGEGGLSLAIEGPSKAEISCTDNQDGTCSVSYLPVLPGDYSILVKYNDQHIPGSPFTARVTGDDSMRMSHLKVGSAADIPINISETDLSLLTATVVPPSGREEPCLLKRLRNGHVGISFVPKETGEHLVHVKKNGQHVASSPIPVVISQSEIGDASRVRVSGQGLHEGHTFEPAEFIIDTRDAGYGGLSLSIEGPSKVDINTEDLEDGTCRVTYCPTEPGNYIINIKFADQHVPGSPFSVKVTGEGRVKESITRRRRAPSVANIGSHCDLSLKIPEISIQDMTAQVTSPSGKTHEAEIVEGENHTYCIRFVPAEMGMHTVSVKYKGQHVPGSPFQFTVGPLGEGGAHKVRAGGPGLERAEVGVPAEFGIWTREAGAGGLAIAVEGPSKAEISFEDRKDGSCGVAYVVQEPGDYEVSVKFNEEHIPDSPFVVPVASPSGDARRLTVSSLQESGLKVNQPASFAVSLNGAKGAIDAKVHSPSGALEECYVTEIDQDKYAVRFIPRENGIYLIDVKFNGTHIPGSPFKIRVGEPGHGGDPGLVSAYGAGLEGGVTGSPAEFIVNTSNAGAGALSVTIDGPSKVKMDCQECPEGYRVTYTPMAPGSYLISIKYGGPYHIGGSPFKAKVTGPRLVSNHSLHETSSVFVDSLTKVATVPQHATSGPGPADVSKVVAKGLGLSKAYVGQKSNFTVDCSKAGNNMLLVGVHGPRTPCEEILVKHMGSRLYSVSYLLKDKGEYTLVVKWGDEHIPGSPYRIMVP.

The interval M1–E37 is disordered. N-acetylserine is present on S2. Positions S2–P274 are actin-binding. S11, S16, and S20 each carry phosphoserine. Positions D22–E37 are enriched in basic and acidic residues. Glycyl lysine isopeptide (Lys-Gly) (interchain with G-Cter in ubiquitin) cross-links involve residues K42, K43, and K135. 2 consecutive Calponin-homology (CH) domains span residues K43 to S149 and Q166 to L269. Residues P271–T294 are disordered. Filamin repeat units follow at residues R276–V374, K376–V474, G475–V570, G571–I663, P667–V763, G764–V866, E867–V965, S966–A1061, V1062–V1154, A1155–V1249, E1250–V1349, T1350–V1442, H1443–V1539, L1540–A1636, and D1641–A1740. K299 participates in a covalent cross-link: Glycyl lysine isopeptide (Lys-Gly) (interchain with G-Cter in SUMO1); alternate. A Glycyl lysine isopeptide (Lys-Gly) (interchain with G-Cter in SUMO2); alternate cross-link involves residue K299. An N6-acetyllysine mark is found at K376 and K508. An N6-acetyllysine mark is found at K700, K781, K837, K865, and K906. Residues S968 and S1055 each carry the phosphoserine modification. Position 1071 is an N6-acetyllysine; alternate (K1071). At K1071 the chain carries N6-succinyllysine; alternate. S1084 carries the phosphoserine modification. T1089 carries the post-translational modification Phosphothreonine. Residues S1301 and S1338 each carry the phosphoserine modification. At K1372 the chain carries N6-acetyllysine. Phosphoserine is present on residues S1459 and S1533. Residues P1490–A1607 are interaction with furin. An N6-acetyllysine modification is found at K1538. Phosphoserine occurs at positions 1630 and 1734. Residues L1741 to V1778 are hinge 1. Position 1750 is a phosphothreonine (T1750). 8 Filamin repeats span residues Q1765–V1860, D1861–V1952, T1953–I2039, S2042–V2134, T2135–V2230, L2233–V2325, S2327–V2420, and G2424–V2516. S1835 carries the post-translational modification Phosphoserine. 10 positions are modified to phosphoserine: S1967, S2053, S2128, S2152, S2158, S2163, S2180, S2284, S2327, and S2329. At T2336 the chain carries Phosphothreonine. 6 positions are modified to phosphoserine: S2338, S2370, S2414, S2510, S2523, and S2526. The interval T2517–G2553 is hinge 2. Positions T2517–P2647 are self-association site, tail. Residues P2552 to V2646 form a Filamin 24 repeat. K2569 carries the post-translational modification N6-acetyllysine; alternate. The residue at position 2569 (K2569) is an N6-succinyllysine; alternate. Residue K2575 is modified to N6-acetyllysine. T2599 carries the phosphothreonine modification. N6-acetyllysine is present on residues K2607 and K2621.

It belongs to the filamin family. Homodimer. Interacts with FCGR1A, FLNB, FURIN, HSPB7, KCND2, INPPL1, MYOT, MYOZ1, PDLIM2, ARHGAP24, PSEN1, PSEN2 and ECSCR. Also interacts with various other binding partners in addition to filamentous actin. Interacts (via N-terminus) with TAF1B. Interacts (via N-terminus) with MIS18BP1 (via N-terminus). Interacts with TMEM67 (via C-terminus) and MKS1. Interacts (via actin-binding domain) with MICALL2 (via calponin-homology (CH) domain). Interacts with RFLNA and RFLNB. Interacts (via filamin repeat 5) with SYK; docks SYK to the plasma membrane. Interacts (via filamin repeats 19 and 21) with DRD3; increased PKA-mediated phosphorylation at Ser-2152. Interacts (via filamin repeat 21) with MAS1, AGTR1 and ADRA1D; increases PKA-mediated phosphorylation of FLNA at Ser-2152. Interacts (via filamin repeats 4, 9, 12, 17, 19, 21, and 23) with GP1BA (high affinity), ITGB7, ITGB2 and FBLIM1. Interacts with CEACAM1 (via cytoplasmic domain); inhibits cell migration and cell scattering by interfering with the interaction between FLNA and RALA. Interacts with FOXC1. Interacts (via calponin-homology (CH) domain 1 and filamin repeat 24) with CRMP1; the interaction alters FLNA ternary structure and thus promotes FLNA dissociation from F-actin. Interacts with DPYSL3/CRMP3 and DPYSL4/CRMP4. In terms of processing, phosphorylation at Ser-2152 is negatively regulated by the autoinhibited conformation of filamin repeats 19-21. Ligand binding induces a conformational switch triggering phosphorylation at Ser-2152 by PKA. Post-translationally, polyubiquitination in the CH1 domain by a SCF-like complex containing ASB2 leads to proteasomal degradation. Prior dissociation from actin may be required to expose the target lysines. Ubiquitinated in endothelial cells by RNF213 downstream of the non-canonical Wnt signaling pathway, leading to its degradation by the proteasome. In terms of tissue distribution, widely expressed. Highly expressed in Purkinje cells.

The protein resides in the cytoplasm. The protein localises to the cell cortex. It localises to the cytoskeleton. It is found in the perikaryon. Its subcellular location is the cell projection. The protein resides in the growth cone. The protein localises to the podosome. In terms of biological role, actin binding protein that promotes orthogonal branching of actin filaments and links actin filaments to membrane glycoproteins. Anchors various transmembrane proteins to the actin cytoskeleton and serves as a scaffold for a wide range of cytoplasmic signaling proteins. Interaction with FLNB may allow neuroblast migration from the ventricular zone into the cortical plate. Tethers cell surface-localized furin, modulates its rate of internalization and directs its intracellular trafficking. Involved in ciliogenesis. Plays a role in cell-cell contacts and adherens junctions during the development of blood vessels, heart and brain organs. Plays a role in platelets morphology through interaction with SYK that regulates ITAM- and ITAM-like-containing receptor signaling, resulting in by platelet cytoskeleton organization maintenance. During the axon guidance process, required for growth cone collapse induced by SEMA3A-mediated stimulation of neurons. The polypeptide is Filamin-A (Flna) (Mus musculus (Mouse)).